We begin with the raw amino-acid sequence, 305 residues long: Homoserine kinase (305 aa).

95–105 (PHGRGLGSSSA) is an ATP binding site.

This sequence belongs to the GHMP kinase family. Homoserine kinase subfamily.

The protein localises to the cytoplasm. The enzyme catalyses L-homoserine + ATP = O-phospho-L-homoserine + ADP + H(+). It functions in the pathway amino-acid biosynthesis; L-threonine biosynthesis; L-threonine from L-aspartate: step 4/5. In terms of biological role, catalyzes the ATP-dependent phosphorylation of L-homoserine to L-homoserine phosphate. The polypeptide is Homoserine kinase (Streptomyces avermitilis (strain ATCC 31267 / DSM 46492 / JCM 5070 / NBRC 14893 / NCIMB 12804 / NRRL 8165 / MA-4680)).